A 318-amino-acid chain; its full sequence is Pantothenate kinase (318 aa).

96-103 contributes to the ATP binding site; it reads GSVAVGKS.

It belongs to the prokaryotic pantothenate kinase family.

The protein localises to the cytoplasm. It catalyses the reaction (R)-pantothenate + ATP = (R)-4'-phosphopantothenate + ADP + H(+). It functions in the pathway cofactor biosynthesis; coenzyme A biosynthesis; CoA from (R)-pantothenate: step 1/5. The chain is Pantothenate kinase from Rhodopseudomonas palustris (strain BisA53).